Reading from the N-terminus, the 67-residue chain is Cell division protein ZapB (67 aa).

Residues 3–59 adopt a coiled-coil conformation; that stretch reads LELLSKLETKIQTALETIELLKMELEEEKQKSIGLAEQNQQLSQDLNSWNEKVTGLV.

Belongs to the ZapB family. In terms of assembly, homodimer. The ends of the coiled-coil dimer bind to each other, forming polymers. Interacts with FtsZ.

The protein localises to the cytoplasm. In terms of biological role, non-essential, abundant cell division factor that is required for proper Z-ring formation. It is recruited early to the divisome by direct interaction with FtsZ, stimulating Z-ring assembly and thereby promoting cell division earlier in the cell cycle. Its recruitment to the Z-ring requires functional FtsA or ZipA. The sequence is that of Cell division protein ZapB from Shewanella woodyi (strain ATCC 51908 / MS32).